The sequence spans 240 residues: UDP-2,3-diacylglucosamine hydrolase (240 aa).

Positions 8, 10, 41, 79, and 114 each coordinate Mn(2+). 79–80 (NR) contacts substrate. 5 residues coordinate substrate: Asp122, Ser160, Thr164, Lys167, and His195. Residues His195 and His197 each coordinate Mn(2+).

The protein belongs to the LpxH family. Mn(2+) is required as a cofactor.

It is found in the cell inner membrane. It catalyses the reaction UDP-2-N,3-O-bis[(3R)-3-hydroxytetradecanoyl]-alpha-D-glucosamine + H2O = 2-N,3-O-bis[(3R)-3-hydroxytetradecanoyl]-alpha-D-glucosaminyl 1-phosphate + UMP + 2 H(+). The protein operates within glycolipid biosynthesis; lipid IV(A) biosynthesis; lipid IV(A) from (3R)-3-hydroxytetradecanoyl-[acyl-carrier-protein] and UDP-N-acetyl-alpha-D-glucosamine: step 4/6. Its function is as follows. Hydrolyzes the pyrophosphate bond of UDP-2,3-diacylglucosamine to yield 2,3-diacylglucosamine 1-phosphate (lipid X) and UMP by catalyzing the attack of water at the alpha-P atom. Involved in the biosynthesis of lipid A, a phosphorylated glycolipid that anchors the lipopolysaccharide to the outer membrane of the cell. This Pseudomonas aeruginosa (strain UCBPP-PA14) protein is UDP-2,3-diacylglucosamine hydrolase.